We begin with the raw amino-acid sequence, 209 residues long: Uracil phosphoribosyltransferase (209 aa).

Residues R79, R104, and 131 to 139 (DPMLATGGS) each bind 5-phospho-alpha-D-ribose 1-diphosphate. Uracil is bound by residues I194 and 199–201 (GDA). A 5-phospho-alpha-D-ribose 1-diphosphate-binding site is contributed by D200.

This sequence belongs to the UPRTase family. Mg(2+) is required as a cofactor.

It catalyses the reaction UMP + diphosphate = 5-phospho-alpha-D-ribose 1-diphosphate + uracil. Its pathway is pyrimidine metabolism; UMP biosynthesis via salvage pathway; UMP from uracil: step 1/1. Its activity is regulated as follows. Allosterically activated by GTP. Its function is as follows. Catalyzes the conversion of uracil and 5-phospho-alpha-D-ribose 1-diphosphate (PRPP) to UMP and diphosphate. The chain is Uracil phosphoribosyltransferase from Streptococcus pneumoniae (strain ATCC BAA-255 / R6).